We begin with the raw amino-acid sequence, 314 residues long: tRNA dimethylallyltransferase (314 aa).

Position 10 to 17 (10 to 17) interacts with ATP; the sequence is GPTGVGKT. A substrate-binding site is contributed by 12–17; sequence TGVGKT. The tract at residues 35 to 38 is interaction with substrate tRNA; that stretch reads DSMQ.

It belongs to the IPP transferase family. Monomer. Requires Mg(2+) as cofactor.

The enzyme catalyses adenosine(37) in tRNA + dimethylallyl diphosphate = N(6)-dimethylallyladenosine(37) in tRNA + diphosphate. Catalyzes the transfer of a dimethylallyl group onto the adenine at position 37 in tRNAs that read codons beginning with uridine, leading to the formation of N6-(dimethylallyl)adenosine (i(6)A). In Finegoldia magna (strain ATCC 29328 / DSM 20472 / WAL 2508) (Peptostreptococcus magnus), this protein is tRNA dimethylallyltransferase.